The chain runs to 651 residues: Translation factor GUF1 homolog, mitochondrial (651 aa).

The N-terminal 26 residues, 1–26, are a transit peptide targeting the mitochondrion; that stretch reads MAVTRAAAPMVGNCSSAMLIIGRRYF. A tr-type G domain is found at 51–228; that stretch reads KKIRNFGIVA…AVVERLPPPK (178 aa). Residues 60 to 67, 121 to 125, and 175 to 178 contribute to the GTP site; these read AHVDHGKS, DTPGH, and NKVD.

Belongs to the TRAFAC class translation factor GTPase superfamily. Classic translation factor GTPase family. LepA subfamily.

It localises to the mitochondrion inner membrane. The catalysed reaction is GTP + H2O = GDP + phosphate + H(+). Its function is as follows. Promotes mitochondrial protein synthesis. May act as a fidelity factor of the translation reaction, by catalyzing a one-codon backward translocation of tRNAs on improperly translocated ribosomes. Binds to mitochondrial ribosomes in a GTP-dependent manner. This Brugia malayi (Filarial nematode worm) protein is Translation factor GUF1 homolog, mitochondrial.